The chain runs to 309 residues: Olfactory receptor 8U9 (309 aa).

The Extracellular portion of the chain corresponds to Met1–Phe28. N-linked (GlcNAc...) asparagine glycosylation occurs at Asn5. A helical membrane pass occupies residues Val29–Ile49. Residues Arg50–Asn56 lie on the Cytoplasmic side of the membrane. The chain crosses the membrane as a helical span at residues Thr57–Ile77. Residues Thr78–Cys97 are Extracellular-facing. A disulfide bridge links Cys97 with Cys179. The chain crosses the membrane as a helical span at residues Ala98–Met118. Topologically, residues Ala119 to Gln143 are cytoplasmic. Residues Leu144 to Phe164 form a helical membrane-spanning segment. Residues Arg165–Gly204 are Extracellular-facing. The helical transmembrane segment at Ile205–Ile225 threads the bilayer. The Cytoplasmic portion of the chain corresponds to Leu226–Ser239. The chain crosses the membrane as a helical span at residues Thr240–Leu260. Residues Gln261–Lys272 are Extracellular-facing. A helical membrane pass occupies residues Met273–Gln293. The Cytoplasmic portion of the chain corresponds to Asn294–Asn309.

Belongs to the G-protein coupled receptor 1 family.

Its subcellular location is the cell membrane. Odorant receptor. In Homo sapiens (Human), this protein is Olfactory receptor 8U9 (OR8U9).